A 45-amino-acid chain; its full sequence is Photosystem II reaction center protein K (45 aa).

Residues 1 to 8 constitute a propeptide that is removed on maturation; the sequence is MEAVLLLA. Residues 24-44 form a helical membrane-spanning segment; it reads MPVIPLFFLALAFVWQAAVGF.

This sequence belongs to the PsbK family. As to quaternary structure, PSII is composed of 1 copy each of membrane proteins PsbA, PsbB, PsbC, PsbD, PsbE, PsbF, PsbH, PsbI, PsbJ, PsbK, PsbL, PsbM, PsbT, PsbX, PsbY, PsbZ, Psb30/Ycf12, peripheral proteins PsbO, CyanoQ (PsbQ), PsbU, PsbV and a large number of cofactors. It forms dimeric complexes.

The protein localises to the cellular thylakoid membrane. One of the components of the core complex of photosystem II (PSII). PSII is a light-driven water:plastoquinone oxidoreductase that uses light energy to abstract electrons from H(2)O, generating O(2) and a proton gradient subsequently used for ATP formation. It consists of a core antenna complex that captures photons, and an electron transfer chain that converts photonic excitation into a charge separation. The chain is Photosystem II reaction center protein K from Acaryochloris marina (strain MBIC 11017).